Here is a 484-residue protein sequence, read N- to C-terminus: SPI-2 type 3 secretion system translocon protein SctE (484 aa).

2 helical membrane passes run 85–105 (FLQT…LNVF) and 152–172 (GIFG…IGAL). 2 coiled-coil regions span residues 107–152 (NNAQ…RKAG) and 413–457 (NTEK…LYKG).

This sequence belongs to the SctE/SipB/YopB family. In terms of assembly, the core secretion machinery of the T3SS is composed of approximately 20 different proteins, including cytoplasmic components, a base, an export apparatus and a needle. This subunit is involved in the formation of a pore, called the translocon, in host membrane. May form a complex with SseB and SseD/SctB2. SseB is required for correct localization of SseC/SctE2 on the bacterial cell surface.

Its subcellular location is the secreted. It localises to the cell surface. The protein resides in the host membrane. In terms of biological role, component of the type III secretion system 2 (SPI-2 T3SS), also called injectisome, which is used to inject bacterial effector proteins into eukaryotic host cells. SseC/SctE2 and SseD/SctB2 are inserted into the host membrane where they form a pore and allow the translocation of effector proteins into the cytosol of target cells. Required for the translocation of SPI-2 effector proteins. Required for systemic Salmonella infection of the mouse. Essential for SpvB-induced actin depolymerization in the host cell cytoplasm. In Salmonella typhimurium (strain LT2 / SGSC1412 / ATCC 700720), this protein is SPI-2 type 3 secretion system translocon protein SctE.